The primary structure comprises 97 residues: Down syndrome critical region protein 8 (97 aa).

In terms of tissue distribution, expressed in numerous tissues; not found in breast, heart, small intestine and liver. Isoform 1: Predominantly expressed in the testis. Isoform 3: Predominantly expressed in the testis, at lower level in the placenta, during malignant progression of melanocytic tumors and in several tumors of varying origins. Isoform 4: Predominantly expressed in the testis, at lower level in the placenta, during malignant progression of melanocytic tumors and in several tumors of varying origins. Isoform 5: Predominantly expressed in the testis. Isoform 6: Predominantly expressed in the testis.

This is Down syndrome critical region protein 8 from Homo sapiens (Human).